We begin with the raw amino-acid sequence, 788 residues long: MFIDKVTNKVNKSVDKTVLKTISKAKEYLSKGGLSLALSANKYEKLVPYNLWYNHELYQITNYTQNNQNMRIRFYNEIMLSPIVSYNEHDLSKIKTLVPNMSLYQPFYPETFYSVWEFLQSEYINQNAMNFLFIGKENKLGSVESLMIYNELYKNNYLNNTYTVWISDNESHDIFSNSYLLKLPKHNYLKQAFKINFLTNTNQLNVYDTIIIDAISQFDDIFDWSKEETDLHANLFYLFTSLKHLKKNTGSILFKFSMMSSQSWFYLFDILFGCFKEYEFFRPKCINPFNSEIYLYLNKFTGNIPKNNILNSILTNLYRQNVTKLFHLNLHHIDINPIFQKYLISRNKWIDNIIDYIDESPQQNNVCYVTKWHNKNNLLQIKDTTNYLDQNNDKYKLSNNSHPKIKSISHNFLLDNNHFKNLLQKRASLNFYKRVMDTRPSRIFLDMSMVHDFSNEYYVTWDYITGTLDFYKNIKNDLKKQYNGEMITTAWIKLYEILNEFPDIIPKKESVKSFHLCEAPGAFVSATHHYMYSLGCELDWYAQTLNPMYENKALDDHYGLMSLYPDKWLFGSKNNNTGDITSSEIIKSYASNKQLSNIDFMTGDAGIYCRPNCLNEQETVMAKINMGQIVCILACLSKGRSAVFKTFLPLTEPLNISLLNLLSSIFEELIFYKPGASNGSNSEIYIVLKSYKGISSSELEMLYLMLDDPKITSTSFITDVICKNFFRSYIKIVSNLIDKQINCLQRNFYYYYNIGELYDLKKNNIYSEYYDEWFNKNKVVYLENTLFS.

Residues 485–693 form the Adrift-type SAM-dependent 2'-O-MTase domain; the sequence is EMITTAWIKL…IYIVLKSYKG (209 aa). S-adenosyl-L-methionine is bound by residues glycine 521 and aspartate 604. Catalysis depends on lysine 645, which acts as the Proton acceptor.

This is an uncharacterized protein from Acanthamoeba polyphaga (Amoeba).